Consider the following 331-residue polypeptide: Junctional sarcoplasmic reticulum protein 1 (331 aa).

Disordered stretches follow at residues 1 to 118 (MSMT…EELP) and 157 to 331 (RVPE…KGRD). The tract at residues 3 to 76 (MTTRAWEELD…EKEPAARGTP (74 aa)) is mediates interaction with CACNA1S. 2 stretches are compositionally biased toward basic and acidic residues: residues 21–35 (LEDHSALAETQEDRA) and 61–71 (TRPKKMEKEPA). 2 stretches are compositionally biased toward pro residues: residues 103–112 (PLQPPPPPPA) and 161–175 (PWVPPSSAPREPSSP). 2 stretches are compositionally biased toward basic and acidic residues: residues 222–242 (AVREDRVTLADRGPKERPRRE) and 250–302 (PRKE…EPRK). Over residues 320 to 331 (SRQKLRAGKGRD) the composition is skewed to basic residues.

Interacts with CACNA1S, CACNB1 and calsequestrin.

It is found in the sarcoplasmic reticulum membrane. The protein resides in the endoplasmic reticulum membrane. In terms of biological role, involved in skeletal muscle excitation/contraction coupling (EC), probably acting as a regulator of the voltage-sensitive calcium channel CACNA1S. EC is a physiological process whereby an electrical signal (depolarization of the plasma membrane) is converted into a chemical signal, a calcium gradient, by the opening of ryanodine receptor calcium release channels. May regulate CACNA1S membrane targeting and activity. This chain is Junctional sarcoplasmic reticulum protein 1 (JSRP1), found in Homo sapiens (Human).